The following is a 387-amino-acid chain: Patatin group J-1 (387 aa).

An N-terminal signal peptide occupies residues 1-23 (MATTKSFLILIVMILATTSSTFA). The PNPLA domain occupies 32–230 (LSIDGGGIKG…TVGDPALLSL (199 aa)). Residues 36–41 (GGGIKG) carry the GXGXXG motif. The GXSXG motif lies at 75 to 79 (GTSTG). Serine 77 serves as the catalytic Nucleophile. The N-linked (GlcNAc...) asparagine glycan is linked to asparagine 115. Aspartate 216 (proton acceptor) is an active-site residue. The short motif at 216–218 (DGG) is the DGA/G element. Residues 322–385 (ENALTGTTTE…NRKKLRANKA (64 aa)) are a coiled coil.

This sequence belongs to the patatin family. In terms of tissue distribution, tuber.

It localises to the vacuole. Probable lipolytic acyl hydrolase (LAH), an activity which is thought to be involved in the response of tubers to pathogens. The chain is Patatin group J-1 from Solanum tuberosum (Potato).